The primary structure comprises 347 residues: Phosphate acyltransferase (347 aa).

It belongs to the PlsX family. As to quaternary structure, homodimer. Probably interacts with PlsY.

It is found in the cytoplasm. It carries out the reaction a fatty acyl-[ACP] + phosphate = an acyl phosphate + holo-[ACP]. The protein operates within lipid metabolism; phospholipid metabolism. Functionally, catalyzes the reversible formation of acyl-phosphate (acyl-PO(4)) from acyl-[acyl-carrier-protein] (acyl-ACP). This enzyme utilizes acyl-ACP as fatty acyl donor, but not acyl-CoA. In Methylobacillus flagellatus (strain ATCC 51484 / DSM 6875 / VKM B-1610 / KT), this protein is Phosphate acyltransferase.